The sequence spans 303 residues: MTPQDLKDVMSSGLLSFPVTDFDSNGNFNAKGYAARLEWLAPYGASALFAAGGTGEYFSLYGEEYGQIIKTAVDTCRGKVPIIAGAGGPTRTAIAHAQEAERLGAHGVLLLPHYLTEAGQEGLIAHVEQVCKSVKFGVIVYNRDRTRFTPESLAILAERCPNLVGFKDGMGNIETMSAIFMKMGDRFAYLGGLPTAEVYAAAYKALGTPVYSSAVFNFIPKTAMAFYEAVRTDDMATQHKLLKEFFMPYLKIRNRVEGYGVSIIKAGAKLVGHDAGPVRAPLTDLKPSELEELKALIDKLGPQ.

It belongs to the DapA family.

The catalysed reaction is 5-dehydro-4-deoxy-D-glucarate + H(+) = 2,5-dioxopentanoate + CO2 + H2O. Its pathway is carbohydrate acid metabolism; D-glucarate degradation; 2,5-dioxopentanoate from D-glucarate: step 2/2. The sequence is that of Probable 5-dehydro-4-deoxyglucarate dehydratase from Delftia acidovorans (strain DSM 14801 / SPH-1).